A 240-amino-acid polypeptide reads, in one-letter code: Methylthioribulose-1-phosphate dehydratase (240 aa).

Residue Cys-100 coordinates substrate. The Zn(2+) site is built by His-117 and His-119. Glu-146 serves as the catalytic Proton donor/acceptor. His-202 is a binding site for Zn(2+).

This sequence belongs to the aldolase class II family. MtnB subfamily. The cofactor is Zn(2+).

It localises to the cytoplasm. It catalyses the reaction 5-(methylsulfanyl)-D-ribulose 1-phosphate = 5-methylsulfanyl-2,3-dioxopentyl phosphate + H2O. Its pathway is amino-acid biosynthesis; L-methionine biosynthesis via salvage pathway; L-methionine from S-methyl-5-thio-alpha-D-ribose 1-phosphate: step 2/6. In terms of biological role, catalyzes the dehydration of methylthioribulose-1-phosphate (MTRu-1-P) into 2,3-diketo-5-methylthiopentyl-1-phosphate (DK-MTP-1-P). This Emericella nidulans (strain FGSC A4 / ATCC 38163 / CBS 112.46 / NRRL 194 / M139) (Aspergillus nidulans) protein is Methylthioribulose-1-phosphate dehydratase.